The sequence spans 569 residues: Beta-galactoside-specific lectin 3 (569 aa).

An N-terminal signal peptide occupies residues 1–33; sequence MNAVMDSRGAWVSCFLILGLVFGATVKAETKFS. The active site involves E198. Disulfide bonds link C280–C311, C327–C346, and C370–C387. Positions 288 to 307 are cleaved as a propeptide — connecting peptide; sequence EVRYWPLVIRPVLENSGAVD. The region spanning 314 to 441 is the Ricin B-type lectin 1 domain; it reads SEPTVRIVGR…YSLGQGWLAG (128 aa). 329-331 provides a ligand contact to D-galactose; sequence DVR. 2 N-linked (GlcNAc...) asparagine glycosylation sites follow: N402 and N442. A Ricin B-type lectin 2 domain is found at 445–568; it reads APREVTIYGF…GNPNQMWLPV (124 aa). Intrachain disulfides connect C458/C471 and C497/C514. 541-543 provides a ligand contact to D-galactose; the sequence is DVA.

This sequence belongs to the ribosome-inactivating protein family. Type 2 RIP subfamily. In terms of assembly, disulfide-linked dimer of A and B chains.

It catalyses the reaction Endohydrolysis of the N-glycosidic bond at one specific adenosine on the 28S rRNA.. In terms of biological role, the A chain is responsible for inhibiting protein synthesis through the catalytic inactivation of 60S ribosomal subunits by removing adenine from position 4,324 of 28S rRNA. The B chain binds to cell receptors and probably facilitates the entry into the cell of the A chain; B chains are also responsible for cell agglutination (lectin activity). Inhibits growth of the human tumor cell line Molt4. In Viscum album (European mistletoe), this protein is Beta-galactoside-specific lectin 3.